Consider the following 160-residue polypeptide: Lipoprotein signal peptidase (160 aa).

Helical transmembrane passes span 13–33 (IYITTIIFILILDISSKRLII), 72–92 (WFLSTVSMLTILVMTRIITKL), and 104–124 (SLIIAGATGNLIDRIFYGFVV). Residues aspartate 125 and aspartate 143 contribute to the active site. The helical transmembrane segment at 134–154 (WHFATFNIADCSIFIGIIILM) threads the bilayer.

Belongs to the peptidase A8 family.

It is found in the cell inner membrane. The catalysed reaction is Release of signal peptides from bacterial membrane prolipoproteins. Hydrolyzes -Xaa-Yaa-Zaa-|-(S,diacylglyceryl)Cys-, in which Xaa is hydrophobic (preferably Leu), and Yaa (Ala or Ser) and Zaa (Gly or Ala) have small, neutral side chains.. It participates in protein modification; lipoprotein biosynthesis (signal peptide cleavage). This protein specifically catalyzes the removal of signal peptides from prolipoproteins. This Buchnera aphidicola subsp. Acyrthosiphon pisum (strain 5A) protein is Lipoprotein signal peptidase.